We begin with the raw amino-acid sequence, 313 residues long: LUC7-related splicing factor homolog (313 aa).

The disordered stretch occupies residues 237–313 (RKEREEKLGS…RDRRDRDRRY (77 aa)).

It belongs to the Luc7 family.

This chain is LUC7-related splicing factor homolog, found in Caenorhabditis elegans.